The sequence spans 428 residues: Histidine--tRNA ligase (428 aa).

This sequence belongs to the class-II aminoacyl-tRNA synthetase family. As to quaternary structure, homodimer.

The protein localises to the cytoplasm. The enzyme catalyses tRNA(His) + L-histidine + ATP = L-histidyl-tRNA(His) + AMP + diphosphate + H(+). The sequence is that of Histidine--tRNA ligase from Mesomycoplasma hyopneumoniae (strain J / ATCC 25934 / NCTC 10110) (Mycoplasma hyopneumoniae).